The primary structure comprises 268 residues: Undecaprenyl-diphosphatase (268 aa).

The next 7 membrane-spanning stretches (helical) occupy residues 5–25, 43–63, 84–104, 107–127, 184–204, 213–233, and 248–268; these read SIIS…IPVS, GNTF…LVYF, FSVL…HGFI, VLFE…IILY, AAEF…ALDL, FDDV…GIFV, and PFAI…WLLG.

The protein belongs to the UppP family.

Its subcellular location is the cell inner membrane. It carries out the reaction di-trans,octa-cis-undecaprenyl diphosphate + H2O = di-trans,octa-cis-undecaprenyl phosphate + phosphate + H(+). Its function is as follows. Catalyzes the dephosphorylation of undecaprenyl diphosphate (UPP). Confers resistance to bacitracin. The chain is Undecaprenyl-diphosphatase from Rhizobium meliloti (strain 1021) (Ensifer meliloti).